Here is a 368-residue protein sequence, read N- to C-terminus: FAD-dependent monooxygenase phomE (368 aa).

A11 lines the FAD pocket. Active-site residues include R140 and Y178. 2 residues coordinate FAD: D249 and G262.

It belongs to the paxM FAD-dependent monooxygenase family. As to quaternary structure, monomer. The cofactor is FAD.

Functionally, FAD-dependent monooxygenase; part of the gene cluster that mediates the biosynthesis of the phomopsins, a group of hexapeptide mycotoxins which infects lupins and causes lupinosis disease in livestock. The role of phomE within the phomopsins biosynthesis pathway has still to be determined. The pathway starts with the processing of the precursor phomA by several endopeptidases including kexin proteases as well as the cluster-specific S41 family peptidase phomP1 and the oligopeptidase phomG to produce 10 identical copies of the hexapeptide Tyr-Val-Ile-Pro-Ile-Asp. After being excised from the precursor peptide, the core peptides are cyclized and modified post-translationally by enzymes encoded within the gene cluster. The timing and order of proteolysis of the phomA precursor and PTMs are still unknown. Two tyrosinase-like enzymes, phomQ1 and phomQ2, catalyze the chlorination and hydroxylation of Tyr, respectively. PhomYb, is proposed to be involved in the construction of the macrocyclic structure. The other 4 ustYa family proteins may be involved in PTMs that generate the unique structure of phomopsin A. PhomYa is required for the hydroxylation of C-beta of Tyr. PhomYc, phomYd, and phomYe are responsible for the biosynthesis of 2,3-dehydroisoleucine (dIle), 2,3-dehydroaspartic acid (dAsp), and 3,4-dehydroproline (dPro), respectively. While dIle formation by phomYc is indispensable for the installation of dAsp by phomYd, the order of the other PTMs have not been elucidated yet. Most of the biosynthetic enzymes likely have broad substrate specificity, and thus, there might be a metabolic grid from a precursor to phomopsin A. The enzyme(s) responsible for the biosynthesis of 3,4-dehydrovaline (dVal) have also not been identified yet. Finally, phomM acts as an S-adenosylmethionine-dependent alpha-N-methyltransferase that catalyzes two successive N-methylation reactions, converting N-desmethyl-phomopsin A to phomopsin A and phomopsin A further to an N,N-dimethylated congener called phomopsin E. In Diaporthe leptostromiformis (Lupinosis disease fungus), this protein is FAD-dependent monooxygenase phomE.